A 406-amino-acid polypeptide reads, in one-letter code: MKAVIIGAGEVGYHIAKALSPKNDVVIIDKDEEAAKRADELDVLVIEGNGANAEILSRVLQNADLLVAVTGVDEVNIVACMTAKLIMKNKNGWKDTKTIARVSNPDYIDSPVTSRAQVGVDLMICPELALASEVADILSSPSAIDAEMFAEGKVRMTEFAISPESKLVGKHMQDLKLADCCIVSAVFREDQIIIPHGDDLIKANDHMVVVGKPESMEDLESVFGSKVSHRTRILLIGCGIVGMYLAKLIDKEENADLRIIEHSKSRCIEVAEILENALVLNGDGTDVSLLREENIEDMDVVVAVTDSDEKNLLCSLLAKQLGAKKVIARADRSDYLPLFEMVGIDMAVSPREATVNEVLKLTMGRGIQTLTTIEGERAEIIEYTASEKSRIVGKPLNKVKFPKGAP.

The RCK N-terminal 1 domain occupies methionine 1 to isoleucine 124. NAD(+)-binding positions include glycine 7–valine 11, aspartate 29, threonine 70–glycine 71, and arginine 101. One can recognise an RCK C-terminal domain in the interval isoleucine 144–serine 225. An RCK N-terminal 2 domain is found at arginine 230 to valine 348. Residue arginine 232 to histidine 262 participates in NAD(+) binding.

Its function is as follows. Part of a potassium transport system. This is Trk system potassium uptake protein trkA homolog 1 (trkA1) from Methanosarcina mazei (Methanosarcina frisia).